The following is a 382-amino-acid chain: MPGKHSDSATSELCEKCKENISILVVRAKPICHDCFARYVHTKAIKRLESFRVNFAASPDQQRKILLPLSHGVSSTTLLHILDLHLNTQRSKTNRTGFAISVLVVDEGSLDPARLDKVRERYANHDYASLPLHDVFRLLPDDASLRAFLPESQVQEVCSTQEQLTSLIASLTSATARADVLTTLRTRLIVEHAKQTGCESILWGDSTTRLAEKTLAETAKGRGFSLPWQISDGKSPFDINFHYPLRDVLKKELFSYVDLAEPALSALVYEPQSGATQASMSSKNTTIDDLMKQYFESVEENFPSIVSNVVRTTGKLEVPTGATSNPRCSLCGMPVPDGRFGIHGWGGDQHGGADDAAAVSGGSLCYGCTRSIPQRGTAVASK.

Belongs to the CTU2/NCS2 family.

The protein resides in the cytoplasm. The protein operates within tRNA modification; 5-methoxycarbonylmethyl-2-thiouridine-tRNA biosynthesis. Plays a central role in 2-thiolation of mcm(5)S(2)U at tRNA wobble positions of tRNA(Lys), tRNA(Glu) and tRNA(Gln). May act by forming a heterodimer with NCS6 that ligates sulfur from thiocarboxylated URM1 onto the uridine of tRNAs at wobble position. Prior mcm(5) tRNA modification by the elongator complex is required for 2-thiolation. May also be involved in protein urmylation. This is Cytoplasmic tRNA 2-thiolation protein 2 from Phaeosphaeria nodorum (strain SN15 / ATCC MYA-4574 / FGSC 10173) (Glume blotch fungus).